Reading from the N-terminus, the 415-residue chain is Serine hydroxymethyltransferase 2 (415 aa).

(6S)-5,6,7,8-tetrahydrofolate contacts are provided by residues Leu121 and Gly125–Leu127. An N6-(pyridoxal phosphate)lysine modification is found at Lys229.

It belongs to the SHMT family. As to quaternary structure, homodimer. It depends on pyridoxal 5'-phosphate as a cofactor.

Its subcellular location is the cytoplasm. The enzyme catalyses (6R)-5,10-methylene-5,6,7,8-tetrahydrofolate + glycine + H2O = (6S)-5,6,7,8-tetrahydrofolate + L-serine. It participates in one-carbon metabolism; tetrahydrofolate interconversion. The protein operates within amino-acid biosynthesis; glycine biosynthesis; glycine from L-serine: step 1/1. In terms of biological role, catalyzes the reversible interconversion of serine and glycine with tetrahydrofolate (THF) serving as the one-carbon carrier. This reaction serves as the major source of one-carbon groups required for the biosynthesis of purines, thymidylate, methionine, and other important biomolecules. Also exhibits THF-independent aldolase activity toward beta-hydroxyamino acids, producing glycine and aldehydes, via a retro-aldol mechanism. The sequence is that of Serine hydroxymethyltransferase 2 from Bordetella bronchiseptica (strain ATCC BAA-588 / NCTC 13252 / RB50) (Alcaligenes bronchisepticus).